The following is a 421-amino-acid chain: Enolase (421 aa).

(2R)-2-phosphoglycerate is bound at residue Q162. E204 serves as the catalytic Proton donor. D241, E284, and D311 together coordinate Mg(2+). Positions 336, 365, 366, and 387 each coordinate (2R)-2-phosphoglycerate. The active-site Proton acceptor is K336.

This sequence belongs to the enolase family. Mg(2+) is required as a cofactor.

The protein resides in the cytoplasm. It localises to the secreted. Its subcellular location is the cell surface. The enzyme catalyses (2R)-2-phosphoglycerate = phosphoenolpyruvate + H2O. It functions in the pathway carbohydrate degradation; glycolysis; pyruvate from D-glyceraldehyde 3-phosphate: step 4/5. In terms of biological role, catalyzes the reversible conversion of 2-phosphoglycerate (2-PG) into phosphoenolpyruvate (PEP). It is essential for the degradation of carbohydrates via glycolysis. The polypeptide is Enolase (Nitratiruptor sp. (strain SB155-2)).